Here is a 144-residue protein sequence, read N- to C-terminus: Transcriptional regulator SlyA (144 aa).

One can recognise an HTH marR-type domain in the interval 2-135; it reads ESPLGSDLAR…LIKLIAKLEH (134 aa). Residues 49 to 72 constitute a DNA-binding region (H-T-H motif); the sequence is QIQLAKAIGIEQPSLVRTLDQLEE.

It belongs to the SlyA family. As to quaternary structure, homodimer.

Functionally, transcription regulator that can specifically activate or repress expression of target genes. The polypeptide is Transcriptional regulator SlyA (Escherichia coli O127:H6 (strain E2348/69 / EPEC)).